The sequence spans 354 residues: Uroporphyrinogen decarboxylase (354 aa).

Residues 27 to 31 (RQAGR), aspartate 77, tyrosine 154, threonine 209, and histidine 327 contribute to the substrate site.

It belongs to the uroporphyrinogen decarboxylase family. In terms of assembly, homodimer.

It is found in the cytoplasm. The catalysed reaction is uroporphyrinogen III + 4 H(+) = coproporphyrinogen III + 4 CO2. Its pathway is porphyrin-containing compound metabolism; protoporphyrin-IX biosynthesis; coproporphyrinogen-III from 5-aminolevulinate: step 4/4. Functionally, catalyzes the decarboxylation of four acetate groups of uroporphyrinogen-III to yield coproporphyrinogen-III. This chain is Uroporphyrinogen decarboxylase, found in Citrobacter koseri (strain ATCC BAA-895 / CDC 4225-83 / SGSC4696).